The primary structure comprises 258 residues: Phosphate import ATP-binding protein PstB (258 aa).

Residues 5–247 (IDVSGLTAYY…ERIFSNPSVQ (243 aa)) form the ABC transporter domain. An ATP-binding site is contributed by 37 to 44 (GPSGCGKS).

The protein belongs to the ABC transporter superfamily. Phosphate importer (TC 3.A.1.7) family. In terms of assembly, the complex is composed of two ATP-binding proteins (PstB), two transmembrane proteins (PstC and PstA) and a solute-binding protein (PstS).

It is found in the cell membrane. It carries out the reaction phosphate(out) + ATP + H2O = ADP + 2 phosphate(in) + H(+). Its function is as follows. Part of the ABC transporter complex PstSACB involved in phosphate import. Responsible for energy coupling to the transport system. This chain is Phosphate import ATP-binding protein PstB, found in Streptomyces avermitilis (strain ATCC 31267 / DSM 46492 / JCM 5070 / NBRC 14893 / NCIMB 12804 / NRRL 8165 / MA-4680).